The primary structure comprises 131 residues: MAKTFKLKIVTPEKIFFEGEAEKINLETTEGKTEILANHSAFIAMLVPTNSKLITDKGEEKKFFLSSGILKVNTEEVVILCDAAEWPEEIDKKRAEEAKKRAEERLSKKDGVDIKRAEFALMRAIKRIEMV.

Belongs to the ATPase epsilon chain family. As to quaternary structure, F-type ATPases have 2 components, CF(1) - the catalytic core - and CF(0) - the membrane proton channel. CF(1) has five subunits: alpha(3), beta(3), gamma(1), delta(1), epsilon(1). CF(0) has three main subunits: a, b and c.

The protein resides in the cell membrane. Its function is as follows. Produces ATP from ADP in the presence of a proton gradient across the membrane. In Clostridium novyi (strain NT), this protein is ATP synthase epsilon chain.